The following is a 272-amino-acid chain: Type III pantothenate kinase (272 aa).

An ATP-binding site is contributed by aspartate 6–valine 13. Glycine 109–arginine 112 contacts substrate. Aspartate 111 (proton acceptor) is an active-site residue. Aspartate 131 lines the K(+) pocket. ATP is bound at residue serine 134. Threonine 186 is a binding site for substrate.

This sequence belongs to the type III pantothenate kinase family. As to quaternary structure, homodimer. The cofactor is NH4(+). K(+) is required as a cofactor.

The protein resides in the cytoplasm. The enzyme catalyses (R)-pantothenate + ATP = (R)-4'-phosphopantothenate + ADP + H(+). It functions in the pathway cofactor biosynthesis; coenzyme A biosynthesis; CoA from (R)-pantothenate: step 1/5. In terms of biological role, catalyzes the phosphorylation of pantothenate (Pan), the first step in CoA biosynthesis. The polypeptide is Type III pantothenate kinase (Mycobacterium ulcerans (strain Agy99)).